Consider the following 420-residue polypeptide: 3-oxo-tetronate kinase (420 aa).

Residues S258, 360 to 363 (GGET), and G403 contribute to the ATP site.

The protein belongs to the four-carbon acid sugar kinase family.

The catalysed reaction is 3-dehydro-L-erythronate + ATP = 3-dehydro-4-O-phospho-L-erythronate + ADP + H(+). The enzyme catalyses 3-dehydro-D-erythronate + ATP = 3-dehydro-4-O-phospho-D-erythronate + ADP + H(+). Functionally, catalyzes the ATP-dependent phosphorylation of 3-oxo-tetronate to 3-oxo-tetronate 4-phosphate. This chain is 3-oxo-tetronate kinase, found in Salmonella typhimurium (strain LT2 / SGSC1412 / ATCC 700720).